The primary structure comprises 624 residues: Mannosyl-oligosaccharide 1,2-alpha-mannosidase MNS3 (624 aa).

Over Met-1–Ser-43 the chain is Cytoplasmic. The helical; Signal-anchor for type II membrane protein transmembrane segment at Cys-44 to Met-64 threads the bilayer. Topologically, residues Ser-65–Thr-624 are lumenal. Residues Asn-69 and Asn-114 are each glycosylated (N-linked (GlcNAc...) asparagine). The tract at residues Leu-91–Pro-123 is disordered. The segment covering Gly-110–Ser-121 has biased composition (low complexity). Residue Glu-212 is the Proton donor of the active site. Asn-236 carries N-linked (GlcNAc...) asparagine glycosylation. The active site involves Asp-357. Asn-377 is a glycosylation site (N-linked (GlcNAc...) asparagine). Residues Cys-428 and Cys-471 are joined by a disulfide bond. The active-site Proton donor is the Glu-485. Asn-503 is a glycosylation site (N-linked (GlcNAc...) asparagine). The active site involves Glu-526. Thr-613 provides a ligand contact to Ca(2+).

Belongs to the glycosyl hydrolase 47 family. Ca(2+) is required as a cofactor. Requires Mn(2+) as cofactor. It depends on Mg(2+) as a cofactor. As to expression, expressed in flowers, siliques, stems, leaves, roots, stamens and sepals.

It localises to the golgi apparatus. The protein resides in the cis-Golgi network membrane. It catalyses the reaction N(4)-(alpha-D-Man-(1-&gt;2)-alpha-D-Man-(1-&gt;2)-alpha-D-Man-(1-&gt;3)-[alpha-D-Man-(1-&gt;2)-alpha-D-Man-(1-&gt;3)-[alpha-D-Man-(1-&gt;2)-alpha-D-Man-(1-&gt;6)]-alpha-D-Man-(1-&gt;6)]-beta-D-Man-(1-&gt;4)-beta-D-GlcNAc-(1-&gt;4)-beta-D-GlcNAc)-L-asparaginyl-[protein] (N-glucan mannose isomer 9A1,2,3B1,2,3) + 4 H2O = N(4)-(alpha-D-Man-(1-&gt;3)-[alpha-D-Man-(1-&gt;3)-[alpha-D-Man-(1-&gt;6)]-alpha-D-Man-(1-&gt;6)]-beta-D-Man-(1-&gt;4)-beta-D-GlcNAc-(1-&gt;4)-beta-D-GlcNAc)-L-asparaginyl-[protein] (N-glucan mannose isomer 5A1,2) + 4 beta-D-mannose. It carries out the reaction N(4)-(alpha-D-Man-(1-&gt;2)-alpha-D-Man-(1-&gt;2)-alpha-D-Man-(1-&gt;3)-[alpha-D-Man-(1-&gt;3)-[alpha-D-Man-(1-&gt;2)-alpha-D-Man-(1-&gt;6)]-alpha-D-Man-(1-&gt;6)]-beta-D-Man-(1-&gt;4)-beta-D-GlcNAc-(1-&gt;4)-beta-D-GlcNAc)-L-asparaginyl-[protein] (N-glucan mannose isomer 8A1,2,3B1,3) + 3 H2O = N(4)-(alpha-D-Man-(1-&gt;3)-[alpha-D-Man-(1-&gt;3)-[alpha-D-Man-(1-&gt;6)]-alpha-D-Man-(1-&gt;6)]-beta-D-Man-(1-&gt;4)-beta-D-GlcNAc-(1-&gt;4)-beta-D-GlcNAc)-L-asparaginyl-[protein] (N-glucan mannose isomer 5A1,2) + 3 beta-D-mannose. The enzyme catalyses N(4)-(alpha-D-Man-(1-&gt;2)-alpha-D-Man-(1-&gt;2)-alpha-D-Man-(1-&gt;3)-[alpha-D-Man-(1-&gt;2)-alpha-D-Man-(1-&gt;3)-[alpha-D-Man-(1-&gt;2)-alpha-D-Man-(1-&gt;6)]-alpha-D-Man-(1-&gt;6)]-beta-D-Man-(1-&gt;4)-beta-D-GlcNAc-(1-&gt;4)-beta-D-GlcNAc)-L-asparaginyl-[protein] (N-glucan mannose isomer 9A1,2,3B1,2,3) + H2O = N(4)-(alpha-D-Man-(1-&gt;2)-alpha-D-Man-(1-&gt;2)-alpha-D-Man-(1-&gt;3)-[alpha-D-Man-(1-&gt;3)-[alpha-D-Man-(1-&gt;2)-alpha-D-Man-(1-&gt;6)]-alpha-D-Man-(1-&gt;6)]-beta-D-Man-(1-&gt;4)-beta-D-GlcNAc-(1-&gt;4)-beta-D-GlcNAc)-L-asparaginyl-[protein] (N-glucan mannose isomer 8A1,2,3B1,3) + beta-D-mannose. Its pathway is protein modification; protein glycosylation. Inhibited by kifunensine and 1-deoxymannojirimycin, but not by swainsonine. Functionally, class I alpha-mannosidase essential for early N-glycan processing. Removes preferentially alpha-1,2-linked mannose residues from Man(9)GlcNAc(2) to produce Man(8)GlcNAc(2). Involved in root development and cell wall biosynthesis. The chain is Mannosyl-oligosaccharide 1,2-alpha-mannosidase MNS3 (MNS3) from Arabidopsis thaliana (Mouse-ear cress).